A 425-amino-acid polypeptide reads, in one-letter code: Interferon-activable protein 211 (425 aa).

In terms of domain architecture, Pyrin spans 1–88 (MVNEYKRIVL…AEILKKERSE (88 aa)). Positions 86 to 99 (RSEVTGETSLEKNG) are enriched in basic and acidic residues. The tract at residues 86–223 (RSEVTGETSL…QNQNIPRGAV (138 aa)) is disordered. Positions 122–153 (TSATQEETSTAQAGTSTAQAGTSTAQAGTSTA) are enriched in low complexity. 4 repeat units span residues 129–135 (TSTAQAG), 136–142 (TSTAQAG), 143–149 (TSTAQAG), and 150–156 (TSTAQKR). The tract at residues 129–177 (TSTAQAGTSTAQAGTSTAQAGTSTAQKRKSMREEETGVKKSKAAKEPDQ) is 4 X 7 AA tandem repeats of T-S-T-A-Q-A-[GR]. Basic and acidic residues predominate over residues 159 to 176 (MREEETGVKKSKAAKEPD). Residues 190-206 (SPILHSSSSASSNILSA) show a composition bias toward low complexity. Over residues 207–218 (KNQKSQPQNQNI) the composition is skewed to polar residues. Residues 213–413 (PQNQNIPRGA…CGDHSFVKVT (201 aa)) enclose the HIN-200 domain.

It belongs to the HIN-200 family. In terms of assembly, interacts with HOXB2. Mononuclear phagocytes.

It localises to the nucleus. Functionally, inhibits cell growth via p53/TP53 and RB1-dependent and independent pathways. May work in synergy with TP53 to promote the transcription of CDKN1A/P21. This Mus musculus (Mouse) protein is Interferon-activable protein 211.